The following is a 454-amino-acid chain: Inner membrane transport protein YajR (454 aa).

Topologically, residues methionine 1–threonine 14 are periplasmic. A helical membrane pass occupies residues tryptophan 15 to leucine 35. The Cytoplasmic segment spans residues threonine 36–glutamate 47. A helical membrane pass occupies residues alanine 48 to phenylalanine 68. At glycine 69–glycine 84 the chain is on the periplasmic side. A helical transmembrane segment spans residues leucine 85–isoleucine 105. The Cytoplasmic segment spans residues leucine 106–methionine 137. A helical transmembrane segment spans residues alanine 138–isoleucine 158. Topologically, residues threonine 159 to histidine 165 are periplasmic. A helical transmembrane segment spans residues alanine 166–valine 186. The Cytoplasmic segment spans residues proline 187–lysine 216. Residues leucine 217 to glycine 237 traverse the membrane as a helical segment. The Periplasmic segment spans residues glutamine 238–valine 252. Residues tyrosine 253–valine 273 form a helical membrane-spanning segment. Topologically, residues lysine 274–glutamine 279 are cytoplasmic. A helical membrane pass occupies residues valine 280–threonine 300. Residues glutamine 301–valine 306 are Periplasmic-facing. A helical membrane pass occupies residues valine 307–isoleucine 327. Over serine 328 to methionine 340 the chain is Cytoplasmic. A helical membrane pass occupies residues glycine 341 to isoleucine 361. Residues asparagine 362–glycine 363 are Periplasmic-facing. The helical transmembrane segment at methionine 364–valine 384 threads the bilayer. The Cytoplasmic segment spans residues alanine 385–alanine 454.

The protein belongs to the major facilitator superfamily.

The protein localises to the cell inner membrane. The polypeptide is Inner membrane transport protein YajR (yajR) (Escherichia coli (strain K12)).